The following is a 526-amino-acid chain: Glutamate--cysteine ligase (526 aa).

Belongs to the glutamate--cysteine ligase type 1 family. Type 1 subfamily.

It carries out the reaction L-cysteine + L-glutamate + ATP = gamma-L-glutamyl-L-cysteine + ADP + phosphate + H(+). Its pathway is sulfur metabolism; glutathione biosynthesis; glutathione from L-cysteine and L-glutamate: step 1/2. In Proteus mirabilis (strain HI4320), this protein is Glutamate--cysteine ligase.